The following is a 641-amino-acid chain: SUMO-activating enzyme subunit 2-A (641 aa).

ATP contacts are provided by residues 24–29 (GAGGIG), Asp-48, 56–59 (NLNR), Lys-72, 95–96 (SI), and 117–122 (DNNAAR). Zn(2+) contacts are provided by Cys-158 and Cys-161. Catalysis depends on Cys-173, which acts as the Glycyl thioester intermediate. Zn(2+) contacts are provided by Cys-439 and Cys-442. The tract at residues 546 to 641 (GDVPEKGPQK…EEDDDIIALD (96 aa)) is disordered. Positions 548–561 (VPEKGPQKPPEESV) are enriched in basic and acidic residues. Residues 562–579 (KNITNGSDDGAQPSTSKA) show a composition bias toward polar residues. 2 stretches are compositionally biased toward acidic residues: residues 582–594 (QDDV…DEES) and 630–641 (PVEEDDDIIALD).

The protein belongs to the ubiquitin-activating E1 family. As to quaternary structure, heterodimer of sae1 and uba2/sae2. The heterodimer corresponds to the two domains that are encoded on a single polypeptide chain in ubiquitin-activating enzyme E1. Interacts with ube2i.

Its subcellular location is the nucleus. It functions in the pathway protein modification; protein sumoylation. Its function is as follows. The heterodimer acts as an E1 ligase for sumo1, sumo2, and sumo3. It mediates ATP-dependent activation of sumo proteins followed by formation of a thioester bond between a sumo protein and a conserved active site cysteine residue on uba2/sae2. The protein is SUMO-activating enzyme subunit 2-A (uba2-a) of Xenopus laevis (African clawed frog).